We begin with the raw amino-acid sequence, 209 residues long: ATP phosphoribosyltransferase (209 aa).

This sequence belongs to the ATP phosphoribosyltransferase family. Short subfamily. As to quaternary structure, heteromultimer composed of HisG and HisZ subunits.

Its subcellular location is the cytoplasm. The catalysed reaction is 1-(5-phospho-beta-D-ribosyl)-ATP + diphosphate = 5-phospho-alpha-D-ribose 1-diphosphate + ATP. It participates in amino-acid biosynthesis; L-histidine biosynthesis; L-histidine from 5-phospho-alpha-D-ribose 1-diphosphate: step 1/9. In terms of biological role, catalyzes the condensation of ATP and 5-phosphoribose 1-diphosphate to form N'-(5'-phosphoribosyl)-ATP (PR-ATP). Has a crucial role in the pathway because the rate of histidine biosynthesis seems to be controlled primarily by regulation of HisG enzymatic activity. The sequence is that of ATP phosphoribosyltransferase from Caldicellulosiruptor saccharolyticus (strain ATCC 43494 / DSM 8903 / Tp8T 6331).